The primary structure comprises 146 residues: Phospholipase A2 (146 aa).

The first 18 residues, 1–18 (MAFLVFAFLTLMAVETYG), serve as a signal peptide directing secretion. 7 disulfides stabilise this stretch: C44–C137, C46–C62, C61–C117, C67–C144, C68–C110, C77–C103, and C95–C108. Residues Y45, G47, and G49 each coordinate Ca(2+). The active site involves H65. D66 serves as a coordination point for Ca(2+). A glycan (N-linked (GlcNAc...) asparagine) is linked at N85. The active site involves D111. An N-linked (GlcNAc...) asparagine glycan is attached at N126.

Requires Ca(2+) as cofactor. N-glycosylated. Glycosylated with mannose chains including Man2(GlcNAc), Man2(GlcNAc)2, Man2(GlcNAc)3, Man2(GlcNAc)4 and Man2(GlcNAc)5. Expressed by the skin glands (at protein level).

The protein localises to the secreted. It catalyses the reaction a 1,2-diacyl-sn-glycero-3-phosphocholine + H2O = a 1-acyl-sn-glycero-3-phosphocholine + a fatty acid + H(+). PLA2 catalyzes the calcium-dependent hydrolysis of the 2-acyl groups in 3-sn-phosphoglycerides. The sequence is that of Phospholipase A2 from Pithecopus azureus (Orange-legged monkey tree frog).